A 157-amino-acid chain; its full sequence is 2-C-methyl-D-erythritol 2,4-cyclodiphosphate synthase (157 aa).

Residues D8 and H10 each contribute to the a divalent metal cation site. 4-CDP-2-C-methyl-D-erythritol 2-phosphate contacts are provided by residues 8–10 (DVH) and 34–35 (HS). H42 serves as a coordination point for a divalent metal cation. Residues 56–58 (DIG), 61–65 (FPDNE), 132–135 (TTTE), F139, and R142 contribute to the 4-CDP-2-C-methyl-D-erythritol 2-phosphate site.

This sequence belongs to the IspF family. As to quaternary structure, homotrimer. The cofactor is a divalent metal cation.

It carries out the reaction 4-CDP-2-C-methyl-D-erythritol 2-phosphate = 2-C-methyl-D-erythritol 2,4-cyclic diphosphate + CMP. It participates in isoprenoid biosynthesis; isopentenyl diphosphate biosynthesis via DXP pathway; isopentenyl diphosphate from 1-deoxy-D-xylulose 5-phosphate: step 4/6. Involved in the biosynthesis of isopentenyl diphosphate (IPP) and dimethylallyl diphosphate (DMAPP), two major building blocks of isoprenoid compounds. Catalyzes the conversion of 4-diphosphocytidyl-2-C-methyl-D-erythritol 2-phosphate (CDP-ME2P) to 2-C-methyl-D-erythritol 2,4-cyclodiphosphate (ME-CPP) with a corresponding release of cytidine 5-monophosphate (CMP). The protein is 2-C-methyl-D-erythritol 2,4-cyclodiphosphate synthase of Desulforamulus reducens (strain ATCC BAA-1160 / DSM 100696 / MI-1) (Desulfotomaculum reducens).